A 467-amino-acid polypeptide reads, in one-letter code: Zinc finger protein 410 (467 aa).

2 disordered regions span residues 84–111 (PDGE…SLLQ) and 187–214 (NAKT…PLPQ). 5 consecutive C2H2-type zinc fingers follow at residues 219–243 (LKCT…LKTH), 249–273 (FICP…MRTH), 279–303 (FVCP…LRIH), 309–333 (FLCE…LVVH), and 339–362 (HQCQ…RKHH). Zn(2+)-binding residues include Cys-221, Cys-226, His-239, His-243, Cys-251, Cys-256, His-269, His-273, Cys-281, Cys-286, His-299, His-303, Cys-311, Cys-316, His-329, His-333, Cys-341, Cys-344, His-357, and His-361.

In terms of assembly, interacts with CDKN2A/p14ARF. In terms of processing, O-glycosylated. O-GlcNAcylation may occur in response to increasing glucose levels and affect transcription factor activity. Sumoylated. Sumoylation increases its half-life, possibly by blocking ubiquitin-mediated degradation.

It localises to the nucleus. It is found in the chromosome. Functionally, transcription factor that binds to the sequence motif 5'-CATCCCATAATA-3', and is specifically required to silence expression of fetal hemoglobin in adult erythroid cells. Prevents expression of fetal hemoglobin genes HBG1 and HBG2 through CHD4: acts as a direct transcriptional activator of CHD4, a central component of the NuRD complex that represses transcription of fetal hemoglobin genes HBG1 and HBG2 in erythroid cells. May also activate transcription of matrix-remodeling genes such as MMP1 during fibroblast senescence. May activate transcription of the gap junction gene GJC1, perhaps in response to increasing glucose. However, recent studies suggest that ZNF410 is dedicated to regulate expression of a single gene: CHD4. The chain is Zinc finger protein 410 from Bos taurus (Bovine).